Here is a 690-residue protein sequence, read N- to C-terminus: Iron-regulated transcriptional activator AFT1 (690 aa).

The disordered stretch occupies residues M1–H21. Residue D110 coordinates Zn(2+). The DNA site is built by K111, K115, I131, E132, R133, S134, D135, and K138. Residue C143 coordinates Zn(2+). Residues R148–K159 show a composition bias toward basic residues. The interval R148–K205 is disordered. A compositionally biased stretch (basic and acidic residues) spans P160–D174. Polar residues predominate over residues S181 to I201. C215 contributes to the Zn(2+) binding site. K226 contributes to the DNA binding site. Zn(2+) is bound by residues H239 and H241. N263 lines the DNA pocket. The short motif at C291–C293 is the CDC [2Fe-2S] cluster binding motif element. Disordered regions lie at residues P335 to Q357 and S612 to D655. Residues S339–V351 are compositionally biased toward polar residues. Over residues H621–N638 the composition is skewed to low complexity. A compositionally biased stretch (basic and acidic residues) spans Q639–H649.

In terms of assembly, homodimer. Dimerization decreases the DNA-binding activity.

It localises to the nucleus. Its activity is regulated as follows. Dimerization via the binding of Fe(2+) or a [2Fe-2S] cluster decreases the DNA-binding activity. Functionally, transcription factor that activates the genes for FRE1, FRE2 and FET3 in response to iron deprivationand thereby plays a central role in iron homeostasis. Also required for the expression of LSO1. Recognizes the consensus iron-responsive element (Fe-RE) sequence 5'-CACCC-3' in the promoters of target genes. Iron could interact directly with AFT1 and inhibits its activity. In high iron condition, the presence of Fe(2+) or [2Fe-2S] cluster leads to dimerization, which in turn leads to a decrease in DNA affinity. This chain is Iron-regulated transcriptional activator AFT1, found in Saccharomyces cerevisiae (strain ATCC 204508 / S288c) (Baker's yeast).